The chain runs to 739 residues: Exocyst complex component 3-like protein (739 aa).

The tract at residues 1-370 (MDSAARDKTQ…DVSDLEPLLT (370 aa)) is mediates interaction with EXOC2, EXOC4 and EXOC5.

The protein belongs to the SEC6 family. In terms of assembly, interacts with EXOC2, EXOC4 and EXOC5; may be part of the exocyst.

It is found in the cytoplasmic vesicle. The protein localises to the secretory vesicle. Functionally, as part of the exocyst, may play a role in regulated exocytosis of insulin granules. The chain is Exocyst complex component 3-like protein (EXOC3L1) from Bos taurus (Bovine).